A 402-amino-acid polypeptide reads, in one-letter code: Apolipoprotein L3 (402 aa).

Belongs to the apolipoprotein L family. In terms of tissue distribution, widely expressed; the highest levels are in prostate, lung and placenta; also detected in kidney, bone marrow, spleen, thymus, spinal cord, adrenal gland, salivary gland, trachea and mammary gland; levels are low in brain, heart, fetal liver, pancreas and testis.

It localises to the cytoplasm. May affect the movement of lipids in the cytoplasm or allow the binding of lipids to organelles. The polypeptide is Apolipoprotein L3 (APOL3) (Homo sapiens (Human)).